Reading from the N-terminus, the 120-residue chain is Large ribosomal subunit protein bL19 (120 aa).

The protein belongs to the bacterial ribosomal protein bL19 family.

Its function is as follows. This protein is located at the 30S-50S ribosomal subunit interface and may play a role in the structure and function of the aminoacyl-tRNA binding site. The sequence is that of Large ribosomal subunit protein bL19 from Chlorobium limicola (strain DSM 245 / NBRC 103803 / 6330).